The primary structure comprises 546 residues: Sterol O-acyltransferase 1 (546 aa).

N-acetylmethionine is present on methionine 1. Residues 1–37 (MVGEEKMSLRNRLSKSGENPEQDEAQRSVSDTQSNGR) form a disordered region. Residues 1 to 134 (MVGEEKMSLR…LDELFEVDHI (134 aa)) lie on the Cytoplasmic side of the membrane. Serine 8 carries the phosphoserine modification. Residues 27-37 (RSVSDTQSNGR) show a composition bias toward polar residues. A cholesterol-binding site is contributed by histidine 133. The helical transmembrane segment at 135–156 (RTIYHMFIGLLILFILSTLVVD) threads the bilayer. The Lumenal portion of the chain corresponds to 157–176 (YIDEGRLVLEFNLLGYAFGK). Residues 177–202 (LPTVIWTWWAMFLSTLSIPYFLFQRW) traverse the membrane as a helical segment. Over 203–214 (AHGYSKTSHPLI) the chain is Cytoplasmic. A helical membrane pass occupies residues 215–240 (YSLSHGFFFLVFQLGILGFVPTYVVL). At 241-248 (AYTLPPAS) the chain is on the lumenal side. The chain crosses the membrane as a helical span at residues 249-272 (RFIVILEQIRMVMKAHSFVRENVP). Residues 273–315 (RVLNAAKEKSSTVPVPTVNQYLYFLFAPTLIYRDSYPRTPTVR) lie on the Cytoplasmic side of the membrane. The helical transmembrane segment at 316-348 (WGYVAVQFLQVFGCLFYVYYIFERLCAPLFRNI) threads the bilayer. The Lumenal portion of the chain corresponds to 349 to 365 (KQEPFSARVLVLCVFNS). The chain crosses the membrane as a helical span at residues 366–391 (ILPGVLMLFLTFFAFLHCWLNAFAEM). Topologically, residues 392–439 (LRFGDRMFYKDWWNSTSYSNYYRTWNVVVHDWLYYYAYKDLLWFFSKR) are cytoplasmic. The FYXDWWN motif motif lies at 399-405 (FYKDWWN). The an acyl-CoA site is built by asparagine 411, arginine 414, asparagine 417, histidine 421, tyrosine 429, lysine 441, and serine 452. The helical transmembrane segment at 440 to 464 (FKSAAMLAVFALSAVVHEYALAVCL) threads the bilayer. The active site involves histidine 456. Residues 465–470 (SYFYPV) are Lumenal-facing. The helical transmembrane segment at 471–486 (LFVLFMFFGMAFNFIV) threads the bilayer. At 487–492 (NDSRKR) the chain is on the cytoplasmic side. The chain crosses the membrane as a helical span at residues 493–524 (PIWNIMVWASLFLGHGVILCFYSQEWYARQHC). Cysteine 524 and cysteine 542 are disulfide-bonded. Residues 525–546 (PLKNPTFLDYVRPRSWTCQYVF) lie on the Lumenal side of the membrane.

This sequence belongs to the membrane-bound acyltransferase family. Sterol o-acyltransferase subfamily. In terms of assembly, may form homo- or heterodimers. Interacts with UBIAD1.

Its subcellular location is the endoplasmic reticulum membrane. It carries out the reaction a sterol + a long-chain fatty acyl-CoA = a long-chain 3-hydroxysterol ester + CoA. The enzyme catalyses cholesterol + an acyl-CoA = a cholesterol ester + CoA. The catalysed reaction is cholesterol + (9Z)-octadecenoyl-CoA = cholesteryl (9Z-octadecenoate) + CoA. It catalyses the reaction cholesterol + hexadecanoyl-CoA = cholesteryl hexadecanoate + CoA. It carries out the reaction octadecanoyl-CoA + cholesterol = cholesteryl octadecanoate + CoA. The enzyme catalyses (9Z,12Z)-octadecadienoyl-CoA + cholesterol = cholesteryl (9Z,12Z)-octadecadienoate + CoA. The catalysed reaction is (5Z,8Z,11Z,14Z)-eicosatetraenoyl-CoA + cholesterol = cholesteryl (5Z,8Z,11Z,14Z)-eicosatetraenoate + CoA. It catalyses the reaction (9Z)-hexadecenoyl-CoA + cholesterol = cholesteryl (9Z)-hexadecenoate + CoA. It carries out the reaction (11Z)-octadecenoyl-CoA + cholesterol = cholesteryl (11Z)-octadecenoate + CoA. The enzyme catalyses (7Z)-octadecenoyl-CoA + cholesterol = cholesteryl (7Z)-octadecenoate + CoA. Catalyzes the formation of fatty acid-cholesterol esters, which are less soluble in membranes than cholesterol. Plays a role in lipoprotein assembly and dietary cholesterol absorption. Preferentially utilizes oleoyl-CoA ((9Z)-octadecenoyl-CoA) as a substrate: shows a higher activity towards an acyl-CoA substrate with a double bond at the delta-9 position (9Z) than towards saturated acyl-CoA or an unsaturated acyl-CoA with a double bond at the delta-7 (7Z) or delta-11 (11Z) positions. In Cricetulus griseus (Chinese hamster), this protein is Sterol O-acyltransferase 1 (SOAT1).